Reading from the N-terminus, the 71-residue chain is MKSMDKLTTGVAYGTSAGSAGYWFLQLLDKVTPSQWAAIGVLGSLVFGLLTYLTNLYFKIKEDKRKAARGE.

This sequence belongs to the lambda phage S protein family.

This is Prophage lysis protein S homolog EssD (essD) from Escherichia coli (strain K12).